The sequence spans 680 residues: DNA-directed RNA polymerase subunit beta' (680 aa).

The Zn(2+) site is built by Cys69, Cys71, Cys87, and Cys90. Asp489, Asp491, and Asp493 together coordinate Mg(2+).

The protein belongs to the RNA polymerase beta' chain family. RpoC1 subfamily. In plastids the minimal PEP RNA polymerase catalytic core is composed of four subunits: alpha, beta, beta', and beta''. When a (nuclear-encoded) sigma factor is associated with the core the holoenzyme is formed, which can initiate transcription. Mg(2+) serves as cofactor. Requires Zn(2+) as cofactor.

The protein localises to the plastid. Its subcellular location is the chloroplast. It catalyses the reaction RNA(n) + a ribonucleoside 5'-triphosphate = RNA(n+1) + diphosphate. DNA-dependent RNA polymerase catalyzes the transcription of DNA into RNA using the four ribonucleoside triphosphates as substrates. The chain is DNA-directed RNA polymerase subunit beta' from Lobularia maritima (Sweet alyssum).